Consider the following 331-residue polypeptide: FMRFamide-related neuropeptides (331 aa).

Positions 1–25 are cleaved as a signal peptide; that stretch reads MRCWSPCSLLVVIAIYCLSSHTSEA. Positions 26–65 are excised as a propeptide; that stretch reads FDLAQACVESQRLSLLPICDTIFAVQQEGAQQSADDGLRS. Phe71 and Phe83 each carry phenylalanine amide. Residues 86–94 constitute a propeptide that is removed on maturation; it reads NVPDLPFED. Residue Phe100 is modified to Phenylalanine amide. Positions 103–168 are excised as a propeptide; sequence AAPQLDDLLK…YVDDVEDSDV (66 aa). The interval 122–153 is disordered; that stretch reads QKSDDTSVRRKRSTDAAPQSNTDSAEQKNDSA. A phenylalanine amide mark is found at Phe174 and Phe181. A propeptide spanning residues 184-194 is cleaved from the precursor; sequence NPSDVGSKLTE. Phe200 is subject to Phenylalanine amide. Residues 203-205 constitute a propeptide that is removed on maturation; it reads DPE. Position 211 is a phenylalanine amide (Phe211). Positions 214 to 216 are excised as a propeptide; it reads SDD. Phe222 carries the phenylalanine amide modification. Residues 225 to 236 constitute a propeptide that is removed on maturation; it reads NPGDAEDELEED. Phe242 carries the phenylalanine amide modification. The propeptide occupies 245–254; the sequence is GDEEDEEEAE. Phe260 carries the phenylalanine amide modification. The propeptide occupies 263–265; it reads DPE. Phe271 is subject to Phenylalanine amide. Residues 274–277 constitute a propeptide that is removed on maturation; that stretch reads NGEE. Phenylalanine amide is present on Phe283. A propeptide spanning residues 286 to 293 is cleaved from the precursor; it reads NPEEPEAD. The residue at position 299 (Phe299) is a Phenylalanine amide. A propeptide spanning residues 302-312 is cleaved from the precursor; sequence GGEEDDVNTEE. Position 318 is a phenylalanine amide (Phe318). Positions 321–331 are excised as a propeptide; that stretch reads SAEKCKGCLEG.

It belongs to the FARP (FMRFamide related peptide) family. In terms of tissue distribution, present ubiquitously in the brain and regions of the central nervous system as well as in the periphery and throughout the dermal chromatophore layer (at protein level).

Its subcellular location is the secreted. Excitatory neurotransmitters that directly modulate chromatophore function by activating chromatophore expansion at the chromatophore neuromuscular junction. This chain is FMRFamide-related neuropeptides, found in Sepia officinalis (Common cuttlefish).